The primary structure comprises 784 residues: Cas scaffolding protein family member 4 (784 aa).

The 63-residue stretch at 11–73 folds into the SH3 domain; sequence PKALLARALY…PANRLQILEE (63 aa). Phosphoserine is present on residues Ser197, Ser246, Ser302, Ser373, and Ser387. Residues 343 to 376 are disordered; sequence TPNIYDVPRAMPDVPQAGKELGKAGGPSENSVDH. Residues 466-536 adopt a coiled-coil conformation; sequence RDSLEANIDA…LLETKERLES (71 aa). The interval 614 to 635 is disordered; it reads KEGESYQRKAPFQKQRASEQPP.

This sequence belongs to the CAS family. In terms of assembly, interacts (via SH3 domain) with PTK2/FAK1 (via C-terminus). Post-translationally, phosphorylated on tyrosines by SRC.

Its subcellular location is the cytoplasm. It is found in the cytoskeleton. The protein localises to the cell junction. It localises to the focal adhesion. Its function is as follows. Docking protein that plays a role in tyrosine kinase-based signaling related to cell adhesion and cell spreading. Regulates PTK2/FAK1 activity, focal adhesion integrity, and cell spreading. The polypeptide is Cas scaffolding protein family member 4 (Sus scrofa (Pig)).